The sequence spans 198 residues: Nucleoside triphosphate pyrophosphatase (198 aa).

Catalysis depends on Asp72, which acts as the Proton acceptor.

It belongs to the Maf family. It depends on a divalent metal cation as a cofactor.

Its subcellular location is the cytoplasm. The enzyme catalyses a ribonucleoside 5'-triphosphate + H2O = a ribonucleoside 5'-phosphate + diphosphate + H(+). It catalyses the reaction a 2'-deoxyribonucleoside 5'-triphosphate + H2O = a 2'-deoxyribonucleoside 5'-phosphate + diphosphate + H(+). Nucleoside triphosphate pyrophosphatase. May have a dual role in cell division arrest and in preventing the incorporation of modified nucleotides into cellular nucleic acids. The sequence is that of Nucleoside triphosphate pyrophosphatase from Corynebacterium aurimucosum (strain ATCC 700975 / DSM 44827 / CIP 107346 / CN-1) (Corynebacterium nigricans).